The sequence spans 478 residues: Glutamate-1-semialdehyde 2,1-aminomutase, chloroplastic (478 aa).

A chloroplast-targeting transit peptide spans Met1–Arg40. Positions Ala15 to Arg36 are disordered. An N6-(pyridoxal phosphate)lysine modification is found at Lys318.

It belongs to the class-III pyridoxal-phosphate-dependent aminotransferase family. HemL subfamily. In terms of assembly, homodimer. It depends on pyridoxal 5'-phosphate as a cofactor.

Its subcellular location is the plastid. The protein resides in the chloroplast. It catalyses the reaction (S)-4-amino-5-oxopentanoate = 5-aminolevulinate. Its pathway is porphyrin-containing compound metabolism; protoporphyrin-IX biosynthesis; 5-aminolevulinate from L-glutamyl-tRNA(Glu): step 2/2. The protein operates within porphyrin-containing compound metabolism; chlorophyll biosynthesis. This chain is Glutamate-1-semialdehyde 2,1-aminomutase, chloroplastic (GSA), found in Oryza sativa subsp. japonica (Rice).